The chain runs to 293 residues: Proximal tail tube connector protein (293 aa).

Disordered stretches follow at residues 106 to 166 and 192 to 240; these read VGVK…FKRD and QIEE…NDKL. Positions 112–126 are enriched in basic and acidic residues; sequence TKNDTDRNDNRDVKQ. The segment covering 127 to 160 has biased composition (polar residues); sequence DLTSNGTSSTDAKQNDTSKTTGNEKSSGSGSITD. Positions 193–205 are enriched in basic and acidic residues; it reads IEEHNENKKRDTK. Over residues 206–231 the composition is skewed to low complexity; that stretch reads TSNTTDTTSNTTGTSTLDSDSKTSNK.

Belongs to the phi29likevirus proximal tail tube connector protein family.

The protein resides in the virion. Forms the proximal part of the tail tube. The sequence is that of Proximal tail tube connector protein (11) from Bacillus phage PZA (Bacteriophage PZA).